A 445-amino-acid polypeptide reads, in one-letter code: tRNA-2-methylthio-N(6)-dimethylallyladenosine synthase (445 aa).

The MTTase N-terminal domain occupies 9-125 (LKYRILTYGC…LPYLIARAKE (117 aa)). Positions 18, 54, 88, 162, 166, and 169 each coordinate [4Fe-4S] cluster. A Radical SAM core domain is found at 148–378 (RKPGLSAFVN…NRRQYQIATE (231 aa)). Positions 381-444 (QELQGSIQEV…TFSLFGEIFN (64 aa)) constitute a TRAM domain.

It belongs to the methylthiotransferase family. MiaB subfamily. As to quaternary structure, monomer. The cofactor is [4Fe-4S] cluster.

The protein localises to the cytoplasm. It catalyses the reaction N(6)-dimethylallyladenosine(37) in tRNA + (sulfur carrier)-SH + AH2 + 2 S-adenosyl-L-methionine = 2-methylsulfanyl-N(6)-dimethylallyladenosine(37) in tRNA + (sulfur carrier)-H + 5'-deoxyadenosine + L-methionine + A + S-adenosyl-L-homocysteine + 2 H(+). Functionally, catalyzes the methylthiolation of N6-(dimethylallyl)adenosine (i(6)A), leading to the formation of 2-methylthio-N6-(dimethylallyl)adenosine (ms(2)i(6)A) at position 37 in tRNAs that read codons beginning with uridine. This chain is tRNA-2-methylthio-N(6)-dimethylallyladenosine synthase, found in Syntrophomonas wolfei subsp. wolfei (strain DSM 2245B / Goettingen).